A 295-amino-acid polypeptide reads, in one-letter code: Protein NEOXANTHIN-DEFICIENT 1 (295 aa).

A disordered region spans residues 221–251 (PAKVSGPSESDADKENSSEDQSSNVESVSRV).

In terms of biological role, required for neoxanthin biosynthesis. Probably not involved directly in the enzymatic conversion of violaxanthin to neoxanthin. Is necessary but not sufficient for neoxanthin synthesis. Seems not required for abscisic acid (ABA) biosynthesis in response to drought stress. In Solanum lycopersicum (Tomato), this protein is Protein NEOXANTHIN-DEFICIENT 1.